Here is a 352-residue protein sequence, read N- to C-terminus: DNA polymerase IV (352 aa).

Positions 6–186 (IIHIDMDAFY…LPLGKIPGAG (181 aa)) constitute a UmuC domain. Mg(2+)-binding residues include Asp-10 and Asp-104. The active site involves Glu-105.

The protein belongs to the DNA polymerase type-Y family. As to quaternary structure, monomer. Requires Mg(2+) as cofactor.

Its subcellular location is the cytoplasm. The catalysed reaction is DNA(n) + a 2'-deoxyribonucleoside 5'-triphosphate = DNA(n+1) + diphosphate. In terms of biological role, poorly processive, error-prone DNA polymerase involved in untargeted mutagenesis. Copies undamaged DNA at stalled replication forks, which arise in vivo from mismatched or misaligned primer ends. These misaligned primers can be extended by PolIV. Exhibits no 3'-5' exonuclease (proofreading) activity. May be involved in translesional synthesis, in conjunction with the beta clamp from PolIII. In Neisseria gonorrhoeae (strain ATCC 700825 / FA 1090), this protein is DNA polymerase IV.